A 333-amino-acid chain; its full sequence is Phosphoribosylformylglycinamidine cyclo-ligase (333 aa).

Belongs to the AIR synthase family.

It is found in the cytoplasm. The catalysed reaction is 2-formamido-N(1)-(5-O-phospho-beta-D-ribosyl)acetamidine + ATP = 5-amino-1-(5-phospho-beta-D-ribosyl)imidazole + ADP + phosphate + H(+). Its pathway is purine metabolism; IMP biosynthesis via de novo pathway; 5-amino-1-(5-phospho-D-ribosyl)imidazole from N(2)-formyl-N(1)-(5-phospho-D-ribosyl)glycinamide: step 2/2. In Methanococcoides burtonii (strain DSM 6242 / NBRC 107633 / OCM 468 / ACE-M), this protein is Phosphoribosylformylglycinamidine cyclo-ligase.